A 934-amino-acid chain; its full sequence is Serine/threonine-protein kinase PknD (934 aa).

Residues 4-296 (YELIRLIGRG…ELRKALQPHL (293 aa)) enclose the Protein kinase domain. Residues 10–18 (IGRGGMGEV) and Lys-33 each bind ATP. The active-site Proton acceptor is the Asp-138.

Belongs to the protein kinase superfamily. Ser/Thr protein kinase family. Post-translationally, autophosphorylated on serine and threonine residues.

The catalysed reaction is L-seryl-[protein] + ATP = O-phospho-L-seryl-[protein] + ADP + H(+). The enzyme catalyses L-threonyl-[protein] + ATP = O-phospho-L-threonyl-[protein] + ADP + H(+). Functionally, together with the serine/threonine kinase Pkn1, may play a role in the specific interactions with host proteins during intracellular growth. This is Serine/threonine-protein kinase PknD from Chlamydia muridarum (strain MoPn / Nigg).